A 194-amino-acid chain; its full sequence is Outer-membrane lipoprotein LolB (194 aa).

An N-terminal signal peptide occupies residues 1 to 18; the sequence is MTLLLRLFTLGCLLLLAG. The N-palmitoyl cysteine moiety is linked to residue cysteine 19. Residue cysteine 19 is the site of S-diacylglycerol cysteine attachment.

This sequence belongs to the LolB family. Monomer.

The protein resides in the cell outer membrane. Plays a critical role in the incorporation of lipoproteins in the outer membrane after they are released by the LolA protein. The polypeptide is Outer-membrane lipoprotein LolB (Aeromonas hydrophila subsp. hydrophila (strain ATCC 7966 / DSM 30187 / BCRC 13018 / CCUG 14551 / JCM 1027 / KCTC 2358 / NCIMB 9240 / NCTC 8049)).